Reading from the N-terminus, the 69-residue chain is Metallothionein-like protein CRS5 (69 aa).

This sequence belongs to the metallothionein superfamily. Type 13 family.

Functionally, critical role in copper (specific) homeostasis and detoxification. May protect by directly chelating and sequestering copper ions. This Saccharomyces cerevisiae (strain RM11-1a) (Baker's yeast) protein is Metallothionein-like protein CRS5 (CRS5).